A 428-amino-acid chain; its full sequence is L-rhamnonate dehydratase (428 aa).

Residues His-56 and Arg-82 each contribute to the substrate site. Mg(2+)-binding residues include Asp-249, Glu-275, and Glu-303. His-352 serves as the catalytic Proton acceptor. Position 372 (Glu-372) interacts with substrate.

It belongs to the mandelate racemase/muconate lactonizing enzyme family. RhamD subfamily. Homooctamer; tetramer of dimers. The cofactor is Mg(2+).

It carries out the reaction L-rhamnonate = 2-dehydro-3-deoxy-L-rhamnonate + H2O. In terms of biological role, catalyzes the dehydration of L-rhamnonate to 2-keto-3-deoxy-L-rhamnonate (KDR). The chain is L-rhamnonate dehydratase from Shigella sonnei (strain Ss046).